A 252-amino-acid polypeptide reads, in one-letter code: C-type lectin domain family 2 member D3 (252 aa).

Positions 1–58 are disordered; it reads MSSSAHLQDAPPLLSGTLTQNEGQTSLRQSSSCGPSAASASESLSGYTESRIPHSKVR. At 1–78 the chain is on the cytoplasmic side; that stretch reads MSSSAHLQDA…ESRVKRYCCY (78 aa). Over residues 16-29 the composition is skewed to polar residues; the sequence is GTLTQNEGQTSLRQ. Low complexity predominate over residues 30–43; it reads SSSCGPSAASASES. Residues 79-99 form a helical; Signal-anchor for type II membrane protein membrane-spanning segment; that stretch reads GGVITVVAIAIVVPLSVTLSV. At 100–252 the chain is on the extracellular side; the sequence is KQMEQTSINN…KPKKYISQSQ (153 aa). The 106-residue stretch at 137 to 242 folds into the C-type lectin domain; that stretch reads YGNKCFYFSE…VYVERPWICS (106 aa). Asn-150 carries N-linked (GlcNAc...) asparagine glycosylation. Cys-158 and Cys-241 form a disulfide bridge.

Its subcellular location is the cell membrane. Its function is as follows. Lectin-type cell surface receptor. This is C-type lectin domain family 2 member D3 (Clec2d3) from Rattus norvegicus (Rat).